The following is a 417-amino-acid chain: Phosphoglycerate kinase 1 (417 aa).

(2R)-3-phosphoglycerate contacts are provided by valine 23, aspartate 24, phenylalanine 25, asparagine 26, asparagine 38, arginine 39, serine 62, histidine 63, glycine 65, arginine 66, leucine 121, arginine 122, histidine 168, and arginine 169. Glycine 212 provides a ligand contact to ADP. Residue glycine 212 participates in CDP binding. 2 residues coordinate AMP: alanine 213 and lysine 214. Residue alanine 213 participates in ATP binding. A Mg(2+)-binding site is contributed by alanine 213. Aspartate 217 provides a ligand contact to CDP. Residue aspartate 217 participates in Mg(2+) binding. Lysine 218 is a binding site for AMP. Lysine 218 lines the ATP pocket. Glycine 236 contributes to the ADP binding site. Residue glycine 236 coordinates CDP. AMP is bound by residues glycine 237 and glycine 311. Glycine 237 and glycine 311 together coordinate ATP. Residues glycine 336 and phenylalanine 341 each contribute to the CDP site. Residue phenylalanine 341 participates in ADP binding. AMP is bound at residue glutamate 342. Positions 342, 374, and 375 each coordinate ATP. Aspartate 374 is a Mg(2+) binding site.

This sequence belongs to the phosphoglycerate kinase family. As to quaternary structure, monomer. Mg(2+) serves as cofactor.

The protein localises to the cytoplasm. The protein resides in the mitochondrion. It catalyses the reaction (2R)-3-phosphoglycerate + ATP = (2R)-3-phospho-glyceroyl phosphate + ADP. Its pathway is carbohydrate degradation; glycolysis; pyruvate from D-glyceraldehyde 3-phosphate: step 2/5. Its function is as follows. Catalyzes one of the two ATP producing reactions in the glycolytic pathway via the reversible conversion of 1,3-diphosphoglycerate to 3-phosphoglycerate. Both L- and D- forms of purine and pyrimidine nucleotides can be used as substrates, but the activity is much lower on pyrimidines. Negatively regulates the biosynthesis of acetyl-CoA from pyruvate in the mitochondrion. The protein is Phosphoglycerate kinase 1 (PGK1) of Rhizopus niveus.